Consider the following 78-residue polypeptide: Omega-conotoxin-like 12 (78 aa).

A signal peptide spans 1-22 (MKLTCVVIVAVLLLTACQLITA). The propeptide occupies 23-42 (DDSRGTQKHRSLRSTTKVSK). Intrachain disulfides connect Cys46/Cys62, Cys53/Cys65, and Cys61/Cys72.

Belongs to the conotoxin O1 superfamily. As to expression, expressed by the venom duct.

It is found in the secreted. Omega-conotoxins act at presynaptic membranes, they bind and block voltage-gated calcium channels (Cav). In Conus striatus (Striated cone), this protein is Omega-conotoxin-like 12.